Reading from the N-terminus, the 191-residue chain is UPF0312 protein Shew185_3055 (191 aa).

An N-terminal signal peptide occupies residues 1–22 (MKKQLLSALIGASLLAPMAASA).

The protein belongs to the UPF0312 family. Type 1 subfamily.

It is found in the periplasm. In Shewanella baltica (strain OS185), this protein is UPF0312 protein Shew185_3055.